Reading from the N-terminus, the 114-residue chain is Fatty acid-binding protein, liver (114 aa).

The protein belongs to the calycin superfamily. Fatty-acid binding protein (FABP) family. Post-translationally, the N-terminus is blocked.

The protein resides in the cytoplasm. Functionally, FABPs are thought to play a role in the intracellular transport of long-chain fatty acids and their acyl-CoA esters. This Lethenteron camtschaticum (Japanese lamprey) protein is Fatty acid-binding protein, liver.